We begin with the raw amino-acid sequence, 292 residues long: 2-(5''-triphosphoribosyl)-3'-dephosphocoenzyme-A synthase (292 aa).

It belongs to the CitG/MdcB family.

The catalysed reaction is 3'-dephospho-CoA + ATP = 2'-(5''-triphospho-alpha-D-ribosyl)-3'-dephospho-CoA + adenine. Catalyzes the formation of 2-(5''-triphosphoribosyl)-3'-dephosphocoenzyme-A, the precursor of the prosthetic group of the holo-acyl carrier protein (gamma chain) of citrate lyase, from ATP and dephospho-CoA. The chain is 2-(5''-triphosphoribosyl)-3'-dephosphocoenzyme-A synthase from Escherichia coli O127:H6 (strain E2348/69 / EPEC).